Consider the following 1169-residue polypeptide: ATP-dependent helicase/deoxyribonuclease subunit B (1169 aa).

Positions 1–296 (MTLRIVSGRS…QHVEANFANM (296 aa)) constitute a UvrD-like helicase ATP-binding domain. ATP is bound at residue 8 to 15 (GRSGTGKS). A UvrD-like helicase C-terminal domain is found at 276-582 (YYTQRFQSED…EFSRIPPTLD (307 aa)). Cys804, Cys1129, Cys1132, and Cys1138 together coordinate [4Fe-4S] cluster.

Belongs to the helicase family. AddB/RexB type 1 subfamily. As to quaternary structure, heterodimer of AddA and AddB. Requires Mg(2+) as cofactor. [4Fe-4S] cluster is required as a cofactor.

The heterodimer acts as both an ATP-dependent DNA helicase and an ATP-dependent, dual-direction single-stranded exonuclease. Recognizes the chi site generating a DNA molecule suitable for the initiation of homologous recombination. The AddB subunit has 5' -&gt; 3' nuclease activity but not helicase activity. The chain is ATP-dependent helicase/deoxyribonuclease subunit B from Lysinibacillus sphaericus (strain C3-41).